The primary structure comprises 733 residues: MATKFPKFSQALAQDPATRRIWYGIATAHDLEAHDGMTEENLYQKIFASHFGHLAVIFLWTAGNLFHVAWQGNFEKWVSNPLKVKPIAHAIWDPHFGESAIKAFSKGNTYPVNIAFSGVYQWWYTIGFRTNQELYLGSVGLLILASVLLFAGWLHLQPKFRPSLAWFKNNESRLNHHLSGLLGVSSLAWTGHIVHVAIPASRGVHVGWENFLTTPPHPAGLTPFYSGDWTVYAANPDSANHVYGTAEGAGTAILTFLGGFHPQTQSLWLSDIAHHQLAIAVVFIVAGHMYRTNFGIGHNMKEILDAHRPPGGRLGAGHTGLFETITNSLHMQLGLALACLGVATSLTAQHMYAITPYAFLSKDFTTEAALYTHHQYIAGFLMVGAFAHGAIFFVRDYDPELNKNNVLARMLEHKEAIISHLSWASLFLGFHTLGLYIHNDTVVAFGQPEKQILFEPLFAEYIQAASGKAVYEFNTLLSSSTSPATVAGNQIWLPGWLEAINNNKNDLFLKIGPGDFLVHHAIALGLHTTTLILVKGALDARGSKLMPDKKDFGYSFPCDGPGRGGTCDISAWDAFYLAMFWMLNTIGWVTFYWHWKHMTIWGGNPGQFDESSNYIMGWLRDYLWLNSSPLINGYNPFGMNNLSVWAWMFLFGHLIWATGFMFLISWRGYWQELIETLVWAHERTPLANLVRWRDKPVALSIVQARLVGLVHFTVGYVLTYAAFVIASTAGKYG.

A run of 8 helical transmembrane segments spans residues 46 to 69 (IFAS…FHVA), 134 to 157 (LYLG…LHLQ), 174 to 198 (LNHH…HVAI), 272 to 290 (IAHH…GHMY), 329 to 352 (LHMQ…QHMY), 368 to 394 (AALY…IFFV), 416 to 438 (AIIS…LYIH), and 516 to 534 (FLVH…LILV). [4Fe-4S] cluster is bound by residues cysteine 558 and cysteine 567. A run of 2 helical transmembrane segments spans residues 574 to 595 (AFYL…YWHW) and 642 to 664 (LSVW…MFLI). Residues histidine 653, methionine 661, and tyrosine 669 each contribute to the chlorophyll a site. Tryptophan 670 is a binding site for phylloquinone. A helical membrane pass occupies residues 706–726 (LVGLVHFTVGYVLTYAAFVIA).

The protein belongs to the PsaA/PsaB family. The PsaA/B heterodimer binds the P700 chlorophyll special pair and subsequent electron acceptors. PSI consists of a core antenna complex that captures photons, and an electron transfer chain that converts photonic excitation into a charge separation. The eukaryotic PSI reaction center is composed of at least 11 subunits. P700 is a chlorophyll a/chlorophyll a' dimer, A0 is one or more chlorophyll a, A1 is one or both phylloquinones and FX is a shared 4Fe-4S iron-sulfur center. serves as cofactor.

It is found in the plastid. The protein localises to the chloroplast thylakoid membrane. The catalysed reaction is reduced [plastocyanin] + hnu + oxidized [2Fe-2S]-[ferredoxin] = oxidized [plastocyanin] + reduced [2Fe-2S]-[ferredoxin]. In terms of biological role, psaA and PsaB bind P700, the primary electron donor of photosystem I (PSI), as well as the electron acceptors A0, A1 and FX. PSI is a plastocyanin/cytochrome c6-ferredoxin oxidoreductase, converting photonic excitation into a charge separation, which transfers an electron from the donor P700 chlorophyll pair to the spectroscopically characterized acceptors A0, A1, FX, FA and FB in turn. Oxidized P700 is reduced on the lumenal side of the thylakoid membrane by plastocyanin or cytochrome c6. The protein is Photosystem I P700 chlorophyll a apoprotein A2 of Phaeodactylum tricornutum (strain CCAP 1055/1).